Reading from the N-terminus, the 393-residue chain is Short-chain dehydrogenase/reductase family 42E member 1 (393 aa).

Y152 serves as the catalytic Proton acceptor. K156 contacts NAD(+). 2 helical membrane-spanning segments follow: residues 282 to 302 (LPLT…FILG) and 371 to 391 (GLVI…SVIL).

It belongs to the 3-beta-HSD family.

It is found in the membrane. The polypeptide is Short-chain dehydrogenase/reductase family 42E member 1 (SDR42E1) (Bos taurus (Bovine)).